We begin with the raw amino-acid sequence, 148 residues long: MGLEKSLILFPLLVLVVGWVQPSLGKETSAMKFERHDVDSDSSSSSPTYCNQMMKRREMTKGSCKPVNTFVHESLQDIHAVCSQKNVKCKNGQTNCYKSRSALRITDCRLTGSSKYPNCEYKTSQQQKHIIVACEGNPSVPVHFDASA.

The N-terminal stretch at 1-25 is a signal peptide; it reads MGLEKSLILFPLLVLVVGWVQPSLG. Substrate contacts are provided by residues Lys32, Arg35, 65 to 69, Lys90, and Arg109; that span reads KPVNT. 4 cysteine pairs are disulfide-bonded: Cys50/Cys108, Cys64/Cys119, Cys82/Cys134, and Cys89/Cys96. The Proton donor role is filled by His143.

This sequence belongs to the pancreatic ribonuclease family. As to quaternary structure, monomer. Interacts with and forms tight 1:1 complexes with RNH1. Dimerization of two such complexes may occur. Interaction with RNH1 inhibits this protein. In terms of tissue distribution, pancreas.

The protein localises to the secreted. The catalysed reaction is an [RNA] containing cytidine + H2O = an [RNA]-3'-cytidine-3'-phosphate + a 5'-hydroxy-ribonucleotide-3'-[RNA].. It carries out the reaction an [RNA] containing uridine + H2O = an [RNA]-3'-uridine-3'-phosphate + a 5'-hydroxy-ribonucleotide-3'-[RNA].. Endonuclease that catalyzes the cleavage of RNA on the 3' side of pyrimidine nucleotides. Acts on single-stranded and double-stranded RNA. This Peromyscus leucopus (White-footed mouse) protein is Ribonuclease pancreatic (RNASE1).